Here is a 306-residue protein sequence, read N- to C-terminus: Polyphosphate kinase PPK2B (306 aa).

This sequence belongs to the polyphosphate kinase 2 (PPK2) family. Class I subfamily. As to quaternary structure, homotetramer. Mn(2+) serves as cofactor.

The enzyme catalyses [phosphate](n) + ATP = [phosphate](n+1) + ADP. It carries out the reaction [phosphate](n) + GTP = [phosphate](n+1) + GDP. In terms of biological role, catalyzes the synthesis of polyP from ATP or GTP. Can also use inorganic polyphosphate (polyP) as a donor to convert ADP to ATP, but the activity is 10-fold higher in vitro for polyP synthesis than for ATP formation. The sequence is that of Polyphosphate kinase PPK2B from Corynebacterium glutamicum (strain ATCC 13032 / DSM 20300 / JCM 1318 / BCRC 11384 / CCUG 27702 / LMG 3730 / NBRC 12168 / NCIMB 10025 / NRRL B-2784 / 534).